A 185-amino-acid polypeptide reads, in one-letter code: Threonylcarbamoyl-AMP synthase (185 aa).

The region spanning 7–185 (AAQRRAARAH…IDFASGRVLR (179 aa)) is the YrdC-like domain.

The protein belongs to the SUA5 family. TsaC subfamily.

The protein localises to the cytoplasm. It catalyses the reaction L-threonine + hydrogencarbonate + ATP = L-threonylcarbamoyladenylate + diphosphate + H2O. Required for the formation of a threonylcarbamoyl group on adenosine at position 37 (t(6)A37) in tRNAs that read codons beginning with adenine. Catalyzes the conversion of L-threonine, HCO(3)(-)/CO(2) and ATP to give threonylcarbamoyl-AMP (TC-AMP) as the acyladenylate intermediate, with the release of diphosphate. The chain is Threonylcarbamoyl-AMP synthase from Laribacter hongkongensis (strain HLHK9).